The following is a 354-amino-acid chain: Ubiquinol oxidase 1a, mitochondrial (354 aa).

Residues 1-62 (MMITRGGAKA…RAPTIGGMRF (62 aa)) constitute a mitochondrion transit peptide. Positions 68–99 (LGEKTPMKEEDANQKKTENESTGGDAAGGNNK) are disordered. The segment covering 72-86 (TPMKEEDANQKKTEN) has biased composition (basic and acidic residues). Residues 179 to 199 (AMMLETVAAVPGMVGGMLLHC) form a helical membrane-spanning segment. Fe cation-binding residues include glutamate 183, glutamate 222, and histidine 225. Residues 241–261 (ALVITVQGVFFNAYFLGYLIS) traverse the membrane as a helical segment. Fe cation-binding residues include glutamate 273, glutamate 324, and histidine 327.

The protein belongs to the alternative oxidase family. In terms of assembly, homodimer; disulfide-linked. It depends on Fe cation as a cofactor. In terms of tissue distribution, expressed in roots, stems, cotyledons, leaves and flowers. High expression in sepals.

The protein localises to the mitochondrion inner membrane. It catalyses the reaction 2 a ubiquinol + O2 = 2 a ubiquinone + 2 H2O. With respect to regulation, when the two monomeric subunits are covalently linked by a S-S bond, the enzyme is essentially inactive. When the disulfide bond is reduced, its component sulfhydryls can associate with K-keto acids through formation of a thiohemiacetal, resulting in enzyme activation. Activated by glyoxylate, irrespective to the substitution found at Cys-127. That suggests the presence of a second activation site, possibly Cys-177. Catalyzes the cyanide-resistant oxidation of ubiquinol and the reduction of molecular oxygen to water, but does not translocate protons and consequently is not linked to oxidative phosphorylation. Increases respiration when the cytochrome respiratory pathway is restricted, or in response to low temperatures. The sequence is that of Ubiquinol oxidase 1a, mitochondrial (AOX1A) from Arabidopsis thaliana (Mouse-ear cress).